Consider the following 376-residue polypeptide: MGEEAAMATMESAYHDELAPAAAPAPAKGGGSKKKRKQQKREEKRKECRLVSYHELPDYMKENEFILDYYRSEWPILNALLSLFSWHNETINIWTHLLGFVLFFGLTVLHLGQYFPQVADLIGHLSWPISKVAENVSSNIGDVLSGAASFMQASPASSAGAMAAAWPVTAAAAATTRWPFFVFLAGAMFCLLSSAACHLLSCHSHRLNLFLIRLDYTGIAVMIVVSFFPPIYYIFQCEPRWQVVYLSAITAAGVATVYALMSPRLSAARYRAHRALLFVAMGLSGVVPAAHAVAVNWHEPRRNVTLAYEGAMAASYLAGTAFYLTRVPERWRPGMFDLCGHSHQIFHALVIAGALAHYAAAIVFIQARDEMGCPAP.

Residues 1–90 are Cytoplasmic-facing; the sequence is MGEEAAMATM…LSLFSWHNET (90 aa). The disordered stretch occupies residues 20–46; that stretch reads PAAAPAPAKGGGSKKKRKQQKREEKRK. A helical transmembrane segment spans residues 91-111; the sequence is INIWTHLLGFVLFFGLTVLHL. Residues 112–179 lie on the Extracellular side of the membrane; it reads GQYFPQVADL…AAAAATTRWP (68 aa). The helical transmembrane segment at 180-200 threads the bilayer; it reads FFVFLAGAMFCLLSSAACHLL. Topologically, residues 201 to 216 are cytoplasmic; that stretch reads SCHSHRLNLFLIRLDY. The chain crosses the membrane as a helical span at residues 217-237; that stretch reads TGIAVMIVVSFFPPIYYIFQC. The Extracellular portion of the chain corresponds to 238-240; that stretch reads EPR. The chain crosses the membrane as a helical span at residues 241-261; that stretch reads WQVVYLSAITAAGVATVYALM. Topologically, residues 262–274 are cytoplasmic; it reads SPRLSAARYRAHR. Residues 275-295 form a helical membrane-spanning segment; the sequence is ALLFVAMGLSGVVPAAHAVAV. The Extracellular portion of the chain corresponds to 296-303; the sequence is NWHEPRRN. Residues 304–324 form a helical membrane-spanning segment; sequence VTLAYEGAMAASYLAGTAFYL. Over 325 to 344 the chain is Cytoplasmic; that stretch reads TRVPERWRPGMFDLCGHSHQ. Residues 345–365 form a helical membrane-spanning segment; it reads IFHALVIAGALAHYAAAIVFI. Topologically, residues 366–376 are extracellular; sequence QARDEMGCPAP.

The protein belongs to the ADIPOR family.

Its subcellular location is the membrane. Its function is as follows. May play a role in abiotic stress response. In Oryza sativa subsp. japonica (Rice), this protein is Heptahelical transmembrane protein ADIPOR1 (ADIPOR1).